Reading from the N-terminus, the 567-residue chain is Mitochondrial distribution and morphology protein 34 (567 aa).

The 224-residue stretch at 1 to 224 folds into the SMP-LTD domain; sequence MSFKFNEESF…LPSALFNMSR (224 aa). Over residues 392 to 416 the composition is skewed to polar residues; it reads NKATETSSNLNADSEITPVSSSHNA. The interval 392–453 is disordered; the sequence is NKATETSSNL…NRSSSFTSSI (62 aa). A compositionally biased stretch (low complexity) spans 417 to 452; the sequence is TSSVNTITSLTTSSLGSTAGSSNSKNTNRSSSFTSS.

The protein belongs to the MDM34 family. In terms of assembly, component of the ER-mitochondria encounter structure (ERMES) or MDM complex, composed of MMM1, MDM10, MDM12 and MDM34.

It localises to the mitochondrion outer membrane. Component of the ERMES/MDM complex, which serves as a molecular tether to connect the endoplasmic reticulum (ER) and mitochondria. Components of this complex are involved in the control of mitochondrial shape and protein biogenesis, and function in nonvesicular lipid trafficking between the ER and mitochondria. MDM34 is required for the interaction of the ER-resident membrane protein MMM1 and the outer mitochondrial membrane-resident beta-barrel protein MDM10. The protein is Mitochondrial distribution and morphology protein 34 of Vanderwaltozyma polyspora (strain ATCC 22028 / DSM 70294 / BCRC 21397 / CBS 2163 / NBRC 10782 / NRRL Y-8283 / UCD 57-17) (Kluyveromyces polysporus).